Consider the following 230-residue polypeptide: Sugar fermentation stimulation protein homolog (230 aa).

Belongs to the SfsA family.

In Clostridium perfringens (strain SM101 / Type A), this protein is Sugar fermentation stimulation protein homolog.